Here is a 741-residue protein sequence, read N- to C-terminus: Phage T7 exclusion protein (741 aa).

Residues 27–334 form the KAP NTPase domain; sequence FGNIAENISR…NSLIFLYPGM (308 aa).

Functionally, responsible for the exclusion of phage T7 by plasmid F. Growth of bacteriophage T7 is inhibited in cells of E.coli that carries the plasmid F. The protein is Phage T7 exclusion protein (pifA) of Escherichia coli (strain K12).